The chain runs to 654 residues: tRNA 5-methylaminomethyl-2-thiouridine biosynthesis bifunctional protein MnmC (654 aa).

A tRNA (mnm(5)s(2)U34)-methyltransferase region spans residues 1-235 (MSDFQHAQLD…KREMLSGTYQ (235 aa)). The FAD-dependent cmnm(5)s(2)U34 oxidoreductase stretch occupies residues 261 to 654 (VGGGLAGCAS…LRDLVRGQRG (394 aa)).

It in the N-terminal section; belongs to the methyltransferase superfamily. tRNA (mnm(5)s(2)U34)-methyltransferase family. In the C-terminal section; belongs to the DAO family. The cofactor is FAD.

It is found in the cytoplasm. It carries out the reaction 5-aminomethyl-2-thiouridine(34) in tRNA + S-adenosyl-L-methionine = 5-methylaminomethyl-2-thiouridine(34) in tRNA + S-adenosyl-L-homocysteine + H(+). Functionally, catalyzes the last two steps in the biosynthesis of 5-methylaminomethyl-2-thiouridine (mnm(5)s(2)U) at the wobble position (U34) in tRNA. Catalyzes the FAD-dependent demodification of cmnm(5)s(2)U34 to nm(5)s(2)U34, followed by the transfer of a methyl group from S-adenosyl-L-methionine to nm(5)s(2)U34, to form mnm(5)s(2)U34. This Pseudomonas aeruginosa (strain ATCC 15692 / DSM 22644 / CIP 104116 / JCM 14847 / LMG 12228 / 1C / PRS 101 / PAO1) protein is tRNA 5-methylaminomethyl-2-thiouridine biosynthesis bifunctional protein MnmC.